The following is a 142-amino-acid chain: Hemoglobin subunit alpha (142 aa).

Ser-1 is modified (N-acetylserine). In terms of domain architecture, Globin spans 1-142 (SLSDKDKNTV…LALALSERYR (142 aa)). Residue His-59 participates in O2 binding. Position 88 (His-88) interacts with heme b.

Belongs to the globin family. As to quaternary structure, heterotetramer of two alpha chains and two beta chains. Can form polymers. As to expression, red blood cells.

Functionally, involved in oxygen transport from gills to the various peripheral tissues. The protein is Hemoglobin subunit alpha (hba) of Chelidonichthys kumu (Bluefin gurnard).